The sequence spans 61 residues: Photosystem II reaction center protein K (61 aa).

The propeptide occupies 1–24 (MPNIFSLICICLNSALQPSGFFFA). A helical membrane pass occupies residues 36–56 (IVDFMPVIPVLFFLLAFVWQA).

This sequence belongs to the PsbK family. PSII is composed of 1 copy each of membrane proteins PsbA, PsbB, PsbC, PsbD, PsbE, PsbF, PsbH, PsbI, PsbJ, PsbK, PsbL, PsbM, PsbT, PsbX, PsbY, PsbZ, Psb30/Ycf12, at least 3 peripheral proteins of the oxygen-evolving complex and a large number of cofactors. It forms dimeric complexes.

It is found in the plastid. It localises to the chloroplast thylakoid membrane. Its function is as follows. One of the components of the core complex of photosystem II (PSII). PSII is a light-driven water:plastoquinone oxidoreductase that uses light energy to abstract electrons from H(2)O, generating O(2) and a proton gradient subsequently used for ATP formation. It consists of a core antenna complex that captures photons, and an electron transfer chain that converts photonic excitation into a charge separation. The sequence is that of Photosystem II reaction center protein K from Nymphaea alba (White water-lily).